A 279-amino-acid chain; its full sequence is Coiled-coil domain-containing protein 117 (279 aa).

Positions 1-82 (MAALGRPFSG…REEEEDDDCP (82 aa)) are disordered. R48 is subject to Omega-N-methylarginine. Residue S53 is modified to Phosphoserine. Positions 63-72 (VSVHCKKKHK) are enriched in basic residues. Residues 141-168 (QCEVARRKLQEIEDRIIDEDEEVEADRN) are a coiled coil. A disordered region spans residues 217–279 (LLSDKPKPSS…ATSTEEEMEL (63 aa)). Composition is skewed to polar residues over residues 224–235 (PSSNTKNYTGES) and 262–272 (SLYNSLETATS).

In terms of assembly, interacts with CIAO2B; the interaction is direct. Interacts with MMS19; the interaction is indirect.

The protein localises to the cytoplasm. The protein resides in the cytoskeleton. It is found in the spindle. It localises to the nucleus. In terms of biological role, facilitates DNA repair, cell cycle progression, and cell proliferation through its interaction with CIAO2B. The sequence is that of Coiled-coil domain-containing protein 117 from Homo sapiens (Human).